The primary structure comprises 325 residues: Malate dehydrogenase (325 aa).

Residue 7–13 (GSTGRVG) participates in NADP(+) binding. Positions 84 and 90 each coordinate substrate. NADP(+)-binding positions include asparagine 97 and 120-122 (VTN). 2 residues coordinate substrate: asparagine 122 and arginine 153. Histidine 177 functions as the Proton acceptor in the catalytic mechanism.

It belongs to the LDH/MDH superfamily.

It catalyses the reaction (S)-malate + NADP(+) = oxaloacetate + NADPH + H(+). It carries out the reaction (S)-malate + NAD(+) = oxaloacetate + NADH + H(+). In terms of biological role, catalyzes the reversible oxidation of malate to oxaloacetate. Can use NAD(+) and NADP(+) with similar specific activity. The chain is Malate dehydrogenase from Methanothermobacter marburgensis (strain ATCC BAA-927 / DSM 2133 / JCM 14651 / NBRC 100331 / OCM 82 / Marburg) (Methanobacterium thermoautotrophicum).